A 62-amino-acid chain; its full sequence is Glucagon (62 aa).

The protein belongs to the glucagon family.

The protein resides in the secreted. Promotes hydrolysis of glycogen and lipids, and raises the blood sugar level. The polypeptide is Glucagon (gcg) (Scyliorhinus canicula (Small-spotted catshark)).